Here is a 157-residue protein sequence, read N- to C-terminus: Ribosome maturation factor RimP (157 aa).

It belongs to the RimP family.

Its subcellular location is the cytoplasm. Functionally, required for maturation of 30S ribosomal subunits. The polypeptide is Ribosome maturation factor RimP (Helicobacter hepaticus (strain ATCC 51449 / 3B1)).